Consider the following 649-residue polypeptide: V-type ATP synthase subunit I (649 aa).

Helical transmembrane passes span 312-332 (FFSF…GLVF), 360-380 (FMIL…FFGV), 453-473 (FIDN…LSLG), 485-505 (IGWV…LQAV), 520-540 (GLVG…GGVI), 556-576 (VFSD…GAMV), and 593-613 (ILII…GGVI).

Belongs to the V-ATPase 116 kDa subunit family.

It is found in the cell membrane. Its function is as follows. Produces ATP from ADP in the presence of a proton gradient across the membrane. The sequence is that of V-type ATP synthase subunit I (atpI) from Chlamydia trachomatis serovar D (strain ATCC VR-885 / DSM 19411 / UW-3/Cx).